A 52-amino-acid polypeptide reads, in one-letter code: Insulin (52 aa).

3 cysteine pairs are disulfide-bonded: C7–C38, C19–C51, and C37–C42.

Belongs to the insulin family. In terms of assembly, heterodimer of a B chain and an A chain linked by two disulfide bonds.

It localises to the secreted. Functionally, insulin decreases blood glucose concentration. It increases cell permeability to monosaccharides, amino acids and fatty acids. It accelerates glycolysis, the pentose phosphate cycle, and glycogen synthesis in liver. This is Insulin (ins) from Acipenser gueldenstaedtii (Russian sturgeon).